Here is a 614-residue protein sequence, read N- to C-terminus: Putative binding protein BMEII0691 (614 aa).

The signal sequence occupies residues 1-28 (MNRFIAFFRSVFLIGLVATAFGALPARA).

This sequence belongs to the bacterial solute-binding protein 5 family.

It localises to the periplasm. This is Putative binding protein BMEII0691 from Brucella melitensis biotype 1 (strain ATCC 23456 / CCUG 17765 / NCTC 10094 / 16M).